A 360-amino-acid chain; its full sequence is Membrane-bound lytic murein transglycosylase C (360 aa).

The signal sequence occupies residues 1–16 (MKKIFALALIAPLLIS). C17 carries the N-palmitoyl cysteine lipid modification. Residue C17 is the site of S-diacylglycerol cysteine attachment.

It belongs to the transglycosylase Slt family.

It is found in the cell outer membrane. It carries out the reaction Exolytic cleavage of the (1-&gt;4)-beta-glycosidic linkage between N-acetylmuramic acid (MurNAc) and N-acetylglucosamine (GlcNAc) residues in peptidoglycan, from either the reducing or the non-reducing ends of the peptidoglycan chains, with concomitant formation of a 1,6-anhydrobond in the MurNAc residue.. In terms of biological role, murein-degrading enzyme. May play a role in recycling of muropeptides during cell elongation and/or cell division. The polypeptide is Membrane-bound lytic murein transglycosylase C (Cronobacter sakazakii (strain ATCC BAA-894) (Enterobacter sakazakii)).